The following is a 190-amino-acid chain: DNA dC-&gt;dU-editing enzyme APOBEC-3C (190 aa).

Residues 29 to 138 (DRNETWLCFT…TDYQEGLRSL (110 aa)) form the CMP/dCMP-type deaminase domain. Zn(2+) is bound by residues histidine 66, cysteine 97, and cysteine 100.

It belongs to the cytidine and deoxycytidylate deaminase family. In terms of assembly, homodimer. Interacts with TRIB3. It depends on Zn(2+) as a cofactor.

It localises to the nucleus. Its subcellular location is the cytoplasm. The catalysed reaction is a 2'-deoxycytidine in single-stranded DNA + H2O + H(+) = a 2'-deoxyuridine in single-stranded DNA + NH4(+). In terms of biological role, DNA deaminase (cytidine deaminase) which acts as an inhibitor of retrovirus replication and retrotransposon mobility via deaminase-dependent and -independent mechanisms. May also play a role in the epigenetic regulation of gene expression through the process of active DNA demethylation. In Gorilla gorilla gorilla (Western lowland gorilla), this protein is DNA dC-&gt;dU-editing enzyme APOBEC-3C (APOBEC3C).